A 1044-amino-acid polypeptide reads, in one-letter code: Disease resistance protein PIK6-NP (1044 aa).

A structured coiled coil (CC) domain region spans residues 3 to 184 (LAVGASEATM…PQIVSIKEPV (182 aa)). Residues 187 to 543 (KTVMENLEKW…IAEGFATEKQ (357 aa)) enclose the NB-ARC domain. The segment at 258–302 (QVSKQEEAGGSTESSSRDENTREPQGSSSTSSREENTAESGTKRM) is disordered. 3 LRR repeats span residues 635 to 657 (LAQV…SFNY), 682 to 705 (MLVL…IEKL), and 706 to 728 (EYLE…VGQL). The tract at residues 737 to 771 (GNKNTRKGLRLPQEKRNKAMKNPSPQGKTKEPAEK) is disordered. LRR repeat units follow at residues 808-834 (LTGL…LLSS), 840-862 (SCGL…LYNM), 866-888 (PRYL…ITSI), 889-911 (TTLN…ILRN), 935-958 (KGIL…EFKS), and 980-1004 (MPAL…ILEN).

It belongs to the disease resistance NB-LRR family.

Functionally, probable disease resistance protein. Resistance proteins guard the plant against pathogens that contain an appropriate avirulence protein via an indirect interaction with this avirulence protein. That triggers a defense system including the hypersensitive response, which restricts the pathogen growth. At the opposite of cultivar Kusabue, the cultivar Nipponbare doesn't recognize the effector avirulence protein AVR-Pik from M.oryzae. In Oryza sativa subsp. japonica (Rice), this protein is Disease resistance protein PIK6-NP.